The primary structure comprises 247 residues: 2,3-bisphosphoglycerate-dependent phosphoglycerate mutase (247 aa).

Residues 8–15 (RHGESQWN), 21–22 (TG), arginine 60, 87–90 (ERHY), lysine 98, 114–115 (RR), and 183–184 (GN) each bind substrate. Catalysis depends on histidine 9, which acts as the Tele-phosphohistidine intermediate. Catalysis depends on glutamate 87, which acts as the Proton donor/acceptor.

The protein belongs to the phosphoglycerate mutase family. BPG-dependent PGAM subfamily.

It catalyses the reaction (2R)-2-phosphoglycerate = (2R)-3-phosphoglycerate. The protein operates within carbohydrate degradation; glycolysis; pyruvate from D-glyceraldehyde 3-phosphate: step 3/5. Its function is as follows. Catalyzes the interconversion of 2-phosphoglycerate and 3-phosphoglycerate. The polypeptide is 2,3-bisphosphoglycerate-dependent phosphoglycerate mutase (Prosthecochloris aestuarii (strain DSM 271 / SK 413)).